The following is a 151-amino-acid chain: Transcriptional regulator SyrB (151 aa).

The disordered stretch occupies residues 1–61 (MADESNTGPV…RYSEQERNDK (61 aa)). Low complexity predominate over residues 33 to 48 (PQKAAAEPAQPKAPAA). The segment covering 52-61 (RYSEQERNDK) has biased composition (basic and acidic residues).

The protein belongs to the SyrB family.

In terms of biological role, responsible for the repression of SyrM activity. The protein is Transcriptional regulator SyrB (syrB) of Rhizobium meliloti (strain 1021) (Ensifer meliloti).